A 458-amino-acid polypeptide reads, in one-letter code: Adenylosuccinate synthetase (458 aa).

GTP contacts are provided by residues 17–23 (GDEGKGK) and 45–47 (GHT). The Proton acceptor role is filled by Asp18. Residues Asp18 and Gly45 each contribute to the Mg(2+) site. IMP is bound by residues 18 to 21 (DEGK), 43 to 46 (NAGH), Thr137, Arg151, Gln247, Thr262, and Arg330. Catalysis depends on His46, which acts as the Proton donor. 326-332 (VTTGRSR) serves as a coordination point for substrate. GTP is bound by residues Arg332, 358–360 (KLD), and 440–442 (STS).

Belongs to the adenylosuccinate synthetase family. As to quaternary structure, homodimer. It depends on Mg(2+) as a cofactor.

It is found in the cytoplasm. It carries out the reaction IMP + L-aspartate + GTP = N(6)-(1,2-dicarboxyethyl)-AMP + GDP + phosphate + 2 H(+). It participates in purine metabolism; AMP biosynthesis via de novo pathway; AMP from IMP: step 1/2. In terms of biological role, plays an important role in the de novo pathway of purine nucleotide biosynthesis. Catalyzes the first committed step in the biosynthesis of AMP from IMP. The chain is Adenylosuccinate synthetase from Acidovorax ebreus (strain TPSY) (Diaphorobacter sp. (strain TPSY)).